A 2541-amino-acid chain; its full sequence is Highly reducing polyketide synthase otaA (2541 aa).

The Ketosynthase family 3 (KS3) domain occupies 9 to 431; sequence SEPLAIIGLA…GTNAHVVLED (423 aa). Active-site for beta-ketoacyl synthase activity residues include Cys-182, His-317, and His-355. One can recognise a Malonyl-CoA:ACP transacylase (MAT) domain in the interval 571-888; it reads FIFTGQGANW…GSLLKRYETD (318 aa). Residues 957–1092 form an N-terminal hotdog fold region; it reads HELLGVPVED…GSVRVETGPH (136 aa). The interval 957-1251 is dehydratase (DH) domain; the sequence is HELLGVPVED…GLDLVQLPPS (295 aa). The region spanning 957–1254 is the PKS/mFAS DH domain; it reads HELLGVPVED…LVQLPPSEDA (298 aa). Residues 1108–1254 form a C-terminal hotdog fold region; that stretch reads TESVDIAQMY…LVQLPPSEDA (147 aa). S-adenosyl-L-methionine is bound by residues Ile-1420 and Glu-1442. Positions 1433-1605 are methyltransferase (CMeT) domain; sequence HAQTGIKVLE…DQELRNAGLQ (173 aa). In terms of domain architecture, Enoyl reductase (ER) spans 1838 to 2141; sequence HQPNGFHFVE…RQGNAGPWVL (304 aa). The 180-residue stretch at 2165–2344 folds into the Ketoreductase (KR) domain; sequence ASYLLIGGFG…PATSISLGSV (180 aa). Positions 2453–2530 constitute a Carrier domain; it reads DAVELVTRAI…QLAQQAAGGS (78 aa). Position 2490 is an O-(pantetheine 4'-phosphoryl)serine (Ser-2490).

Pantetheine 4'-phosphate is required as a cofactor.

The enzyme catalyses 4 malonyl-CoA + acetyl-CoA + 5 NADPH + 9 H(+) = 7-methylmellein + 3 CO2 + 5 NADP(+) + 5 CoA + 4 H2O. Its pathway is mycotoxin biosynthesis. Highly reducing polyketide synthase; part of the gene cluster that mediates the biosynthesis of ochratoxin A (OTA), a mycotoxin composed of a chlorinated type I polyketide dihydroisocoumarin moiety linked to L-phenylalanine, and demonstrated to have nephrotoxic, immunotoxic, genotoxic, neurotoxic, and teratogenic properties. OtaA catalyzes the condensation of one acetate and 4 malonate units to form the isocoumarin group. The pathway begins with the highly reducing polyketide synthase otaA that catalyzes the formation of the isocoumarin group during the initial stages of biosynthesis, starting from one acetate and 4 malonate units, to originate the characteristic pentaketide skeleton 7-methylmellein (7-MM) of the OTA molecule. The newly identified cyclase otaY might be involved in the polyketide cyclization reaction during the initial steps of the OTA biosynthesis. 7-MM is then oxidized into 7-carboxymellein (also called ochratoxin beta) by the cytochrome P450 monooxygenase otaC. The NRPS encoded by the otaB gene is involved in the linking of phenylalanine to the dihydroisocoumarin ring. The reaction catalyzed by NRPS results in the production of ochratoxin B (OTB), which is the non-chlorinated analog of OTA and which subsequently serves as the substrate of the halogenase otaD for chlorination activity to form the final molecular structure of OTA, containing a chlorine atom in the C-5 position of the molecule. The sequence is that of Highly reducing polyketide synthase otaA from Aspergillus carbonarius (strain ITEM 5010).